Reading from the N-terminus, the 90-residue chain is MVILDPTLDERTVAPSLETFLNVIRKDGGTVDKVDIWGRRRLAYEIAKHAEGIYAVIDVKAEPATVSELDRQLNLNESVLRTKVLRTDKH.

Residue Lys33 forms an Isoglutamyl lysine isopeptide (Lys-Gln) (interchain with Q-Cter in protein Pup) linkage.

The protein belongs to the bacterial ribosomal protein bS6 family.

In terms of biological role, binds together with bS18 to 16S ribosomal RNA. The sequence is that of Small ribosomal subunit protein bS6 (rpsF) from Mycolicibacterium smegmatis (strain ATCC 700084 / mc(2)155) (Mycobacterium smegmatis).